Consider the following 1961-residue polypeptide: Ankyrin-3 (1961 aa).

Residues Met1–Ala10 show a composition bias toward basic and acidic residues. The interval Met1–Asn25 is disordered. Basic residues predominate over residues Lys11 to Lys20. A Phosphoserine modification is found at Ser22. ANK repeat units follow at residues Asn56 to Ala85, Lys89 to Ala118, Asn122 to Leu151, Asp155 to Val184, Leu186 to Val213, Ser217 to Phe246, Asn250 to Ala279, Asp283 to Ser312, Asn316 to Asp345, Asp349 to Ala378, Asn382 to Ala411, Ser415 to Thr444, Arg448 to Ala477, Asp481 to Ala510, Ser514 to Ile543, Lys547 to Ala576, Ser580 to Ala609, Asn613 to Ala642, Gln646 to Leu675, Ser679 to Ala708, Met712 to Ala741, Asn745 to Glu774, and Asn778 to Thr807. Ser606 is subject to Phosphoserine. Leu732 bears the Phosphoserine mark. Residues Ser830, Ser844, Ser850, Ser873, Ser914, Ser917, Ser923, Ser958, Ser960, and Ser1114 each carry the phosphoserine modification. 2 ZU5 domains span residues Phe985 to Arg1140 and Lys1142 to Cys1289. The UPA domain stretch occupies residues Val1274–Glu1408. Ser1451, Ser1462, Ser1470, Ser1473, and Gly1560 each carry phosphoserine. The Death domain occupies Thr1478–Ile1562. 5 disordered regions span residues Pro1606–Asp1678, Ser1698–Asp1740, Trp1784–Arg1818, Pro1844–Pro1884, and Met1915–His1961. The span at Gln1725 to Asp1740 shows a compositional bias: basic and acidic residues. Positions Trp1784 to Ser1795 are enriched in polar residues. Ser1795, Ser1813, and Ser1883 each carry phosphoserine. The span at Asp1808–Arg1818 shows a compositional bias: basic and acidic residues. Basic and acidic residues predominate over residues Gly1933 to His1961.

As to quaternary structure, may be a constituent of a NFASC/NRCAM/ankyrin G complex. Interacts with RHBG. Directly interacts with DMD and betaDAG1; this interaction does not interfere with DMD-binding and is required for DMD and betaDAG1 retention at costameres. Interacts (via N-terminal ANK repeats) with SCHIP1 isoform 7 (via C-terminus); this interaction is required for the localization at axon initial segments (AISs) and nodes of Ranvier (NRs). Interacts with PLEC and FLNC. Interacts with KCNA1; this inhibits channel activity. Interacts with SCN5A. Interacts with PKP2 and GJA1/CX43. In terms of tissue distribution, expressed in many epithelial tissues, muscles and axons. Expressed in kidney, brain, skin, lung, liver, intestine, pancreas, heart and testis (at protein level). In testis, expressed in Leydig cells, but very weakly or not at all in Sertoli cells or seminiferous tubules. Expressed in macrophages (at protein level).

Its subcellular location is the cytoplasm. It is found in the cytoskeleton. The protein resides in the cell projection. The protein localises to the axon. It localises to the cell membrane. Its subcellular location is the sarcolemma. It is found in the postsynaptic cell membrane. The protein resides in the lysosome. The protein localises to the T-tubule. Functionally, membrane-cytoskeleton linker. May participate in the maintenance/targeting of ion channels and cell adhesion molecules at the nodes of Ranvier and axonal initial segments. In skeletal muscle, required for costamere localization of DMD and betaDAG1. Regulates KCNA1 channel activity in function of dietary Mg(2+) levels, and thereby contributes to the regulation of renal Mg(2+) reabsorption. Required for intracellular adhesion and junctional conductance in myocytes, potentially via stabilization of GJA1/CX43 protein abundance and promotion of PKP2, GJA1/CX43, and SCN5A/Nav1.5 localization to cell-cell junctions. The protein is Ankyrin-3 (Ank3) of Mus musculus (Mouse).